The following is a 463-amino-acid chain: Aurantioclavine synthase cnsA (463 aa).

Residues 16 to 199 (ERFNQRGNVF…TQATVRVFPD (184 aa)) enclose the FAD-binding PCMH-type domain.

It belongs to the oxygen-dependent FAD-linked oxidoreductase family. FAD is required as a cofactor.

It participates in alkaloid biosynthesis. FAD-linked oxidoreductase; part of the gene cluster that mediates the biosynthesis of communesins, a prominent class of indole alkaloids with great potential as pharmaceuticals. Communesins are biosynthesized by the coupling of tryptamine and aurantioclavine, two building blocks derived from L-tryptophan. The L-tryptophan decarboxylase cnsB converts L-tryptophan to tryptamine, whereas the tryptophan dimethylallyltransferase cnsF converts L-tryptophan to 4-dimethylallyl tryptophan which is further transformed to aurantioclavine by the aurantioclavine synthase cnsA, probably aided by the catalase cnsD. The cytochrome P450 monooxygenase cnsC catalyzes the heterodimeric coupling between the two different indole moieties, tryptamine and aurantioclavine, to construct vicinal quaternary stereocenters and yield the heptacyclic communesin scaffold. The O-methyltransferase cnsE then methylates the communesin scaffold to produce communesin K, the simplest characterized communesin that contains the heptacyclic core. The dioxygenase cnsJ converts communesin K into communesin I. Acylation to introduce the hexadienyl group at position N16 of communesin I by the acyltransferase cnsK leads to the production of communesin B. The hexadienyl group is produced by the highly reducing polyketide synthase cnsI, before being hydrolytically removed from cnsI by the serine hydrolase cnsH, converted into hexadienyl-CoA by the CoA ligase cnsG, and then transferred to communesin I by cnsK. Surprisingly, cnsK may also be a promiscuous acyltransferase that can tolerate a range of acyl groups, including acetyl-, propionyl-, and butyryl-CoA, which lead to communesins A, G and H respectively. The roles of the alpha-ketoglutarate-dependent dioxygenases cnsM and cnsP have still to be determined. The sequence is that of Aurantioclavine synthase cnsA from Penicillium expansum (Blue mold rot fungus).